The sequence spans 608 residues: Protoheme IX farnesyltransferase (608 aa).

The segment at 1 to 338 (MKTPAWSRLA…DYLALTKPRV (338 aa)) is COX15/CtaA. 17 consecutive transmembrane segments (helical) span residues 10-30 (AGYA…GAYV), 67-87 (ATSG…LRAF), 99-119 (LALF…LFGW), 139-159 (TYFL…GGPL), 167-187 (VGLA…SGAV), 220-240 (VLHP…GYLV), 252-272 (LAQG…INVA), 277-297 (VWMQ…FVFL), 338-357 (VISL…AKGW), 362-384 (VFLA…NMVV), 411-431 (LLFA…GANL), 432-452 (LAAT…TLYL), 460-480 (IVIG…AVTG), 488-508 (YLFA…ALMI), 530-550 (VIQI…PLLL), 555-575 (LLYL…SLAL), and 584-604 (AVSL…AMAV). Residues 339 to 608 (ISLLLFTALF…FAAMAVDRAV (270 aa)) form a protoheme IX prenyltransferase region.

In the N-terminal section; belongs to the COX15/CtaA family. It in the C-terminal section; belongs to the UbiA prenyltransferase family. Protoheme IX farnesyltransferase subfamily.

It localises to the cell inner membrane. The catalysed reaction is heme b + (2E,6E)-farnesyl diphosphate + H2O = Fe(II)-heme o + diphosphate. It functions in the pathway porphyrin-containing compound metabolism; heme O biosynthesis; heme O from protoheme: step 1/1. Its function is as follows. Converts heme B (protoheme IX) to heme O by substitution of the vinyl group on carbon 2 of heme B porphyrin ring with a hydroxyethyl farnesyl side group. This chain is Protoheme IX farnesyltransferase (ctaB), found in Thermus thermophilus (strain ATCC 27634 / DSM 579 / HB8).